Here is a 480-residue protein sequence, read N- to C-terminus: Dihydrolipoyllysine-residue acetyltransferase component 4 of pyruvate dehydrogenase complex, chloroplastic (480 aa).

A chloroplast-targeting transit peptide spans 1–53 (MAVSSSSFLSTASLTNSKSNISFASSVSPSLRSVVFRSTTPATSHRRSMTVRS). The Lipoyl-binding domain maps to 55 to 133 (IREIFMPALS…AAIGLLAETE (79 aa)). Lys-96 carries the post-translational modification N6-lipoyllysine. Disordered regions lie at residues 140–168 (KSKAASKSSSSVAEAVVPSPPPVTSSPAP) and 224–245 (AGIAPSKSSIAPPPPPPPPVTA). A compositionally biased stretch (low complexity) spans 142 to 156 (KAASKSSSSVAEAVV). Residues 187 to 224 (VATPYAKKLAKQHKVDIESVAGTGPFGRITASDVETAA) enclose the Peripheral subunit-binding (PSBD) domain. A compositionally biased stretch (pro residues) spans 234-243 (APPPPPPPPV). His-453 is a catalytic residue.

This sequence belongs to the 2-oxoacid dehydrogenase family. (R)-lipoate serves as cofactor.

It is found in the plastid. Its subcellular location is the chloroplast stroma. The enzyme catalyses N(6)-[(R)-dihydrolipoyl]-L-lysyl-[protein] + acetyl-CoA = N(6)-[(R)-S(8)-acetyldihydrolipoyl]-L-lysyl-[protein] + CoA. The pyruvate dehydrogenase complex catalyzes the overall conversion of pyruvate to acetyl-CoA and CO(2). It contains multiple copies of three enzymatic components: pyruvate dehydrogenase (E1), dihydrolipoamide acetyltransferase (E2) and lipoamide dehydrogenase (E3). This Arabidopsis thaliana (Mouse-ear cress) protein is Dihydrolipoyllysine-residue acetyltransferase component 4 of pyruvate dehydrogenase complex, chloroplastic (LTA2).